A 231-amino-acid chain; its full sequence is Cutinase 2 (231 aa).

An N-terminal signal peptide occupies residues 1 to 16 (MKFFALTTLLAATASA). C48 and C126 form a disulfide bridge. The Nucleophile role is filled by S137. A disulfide bridge connects residues C188 and C195. Residue D192 is part of the active site. The active-site Proton donor/acceptor is H205.

The protein belongs to the cutinase family. Post-translationally, the 2 disulfide bonds play a critical role in holding the catalytic residues in juxta-position; reduction of the disulfide bridges results in the complete inactivation of the enzyme.

The protein resides in the secreted. The catalysed reaction is cutin + H2O = cutin monomers.. Functionally, catalyzes the hydrolysis of complex carboxylic polyesters found in the cell wall of plants. Degrades cutin, a macromolecule that forms the structure of the plant cuticle. Allows pathogenic fungi to penetrate through the cuticular barrier into the host plant during the initial stage of fungal infection. The protein is Cutinase 2 (CUT2) of Fusarium vanettenii (Neocosmospora pisi).